The primary structure comprises 176 residues: Adenylyl-sulfate kinase (176 aa).

12 to 19 provides a ligand contact to ATP; sequence GLSGAGKT. S86 serves as the catalytic Phosphoserine intermediate.

The protein belongs to the APS kinase family.

It catalyses the reaction adenosine 5'-phosphosulfate + ATP = 3'-phosphoadenylyl sulfate + ADP + H(+). It functions in the pathway sulfur metabolism; hydrogen sulfide biosynthesis; sulfite from sulfate: step 2/3. In terms of biological role, catalyzes the synthesis of activated sulfate. The sequence is that of Adenylyl-sulfate kinase from Synechococcus sp. (strain JA-3-3Ab) (Cyanobacteria bacterium Yellowstone A-Prime).